Reading from the N-terminus, the 372-residue chain is Spermidine/putrescine import ATP-binding protein PotA (372 aa).

The ABC transporter domain occupies Ile11–Ile241. Gly43–Thr50 provides a ligand contact to ATP.

Belongs to the ABC transporter superfamily. Spermidine/putrescine importer (TC 3.A.1.11.1) family. As to quaternary structure, the complex is composed of two ATP-binding proteins (PotA), two transmembrane proteins (PotB and PotC) and a solute-binding protein (PotD).

Its subcellular location is the cell inner membrane. The catalysed reaction is ATP + H2O + polyamine-[polyamine-binding protein]Side 1 = ADP + phosphate + polyamineSide 2 + [polyamine-binding protein]Side 1.. In terms of biological role, part of the ABC transporter complex PotABCD involved in spermidine/putrescine import. Responsible for energy coupling to the transport system. The chain is Spermidine/putrescine import ATP-binding protein PotA from Haemophilus influenzae (strain ATCC 51907 / DSM 11121 / KW20 / Rd).